The following is a 537-amino-acid chain: MAMCASPRPFRRVGSAGAAALAAGGAGGAERRGRPAPLQDETLGVASVPSQWRSVQGIRGETKSCQTAGIATAESSAQARTHADAQVQTEAPEEPAAMAPVSQYDTLRLEAFLRRVEAMVIRELNNNWQSHAFDGYEVNWTEQQQTVSCLHTLVYPLAQGQGLHVTGISWNSTGSVLACAYGRLDDGDWSTLKSYVCTWNLDRQGLNPQQPSVVVEVPSAVMCLAFHPTQPSHIAGGLYSGEVLVWDMSRPEDPLLWRTGLTDDTHTDPVYQVLWLPEPRHSHRFQVLSAATDGKVLLWRGSGAGQLRLTKGFALAVQQLPRSTKLKKPPRGETEVGVTSVAFSSFDSSLFVLGTEGGFPLKCSLASEVAALTRMPSSVPLRAPVQFTFSPHGGPVYSVSCSPFHRNLFLSAGTDGHVHLYSMLQAQPLTSLQLSHKYLFAVRWSPVRPLVFAAASGEGDVQLFDLQKSSQKPTVSITQTQDGSPVYCLEFNSQQTQLLAAGDAKGMVKVWQLSTAFTEQGPREVEDLDQLEAEITT.

The residue at position 15 (S15) is a Phosphoserine. Residues R80–E93 form a DYNLL2 binding region. Residues L107 to A132 form a DYNLRB1 binding region. WD repeat units follow at residues E216 to L256, T265 to L309, P391 to S431, L434 to T474, and Q481 to G521.

Belongs to the dynein light intermediate chain family. In terms of assembly, the cytoplasmic dynein 2 complex consists of two catalytic heavy chains (HCs) and a number of non-catalytic subunits presented by intermediate chains (ICs), light intermediate chains (LICs) and light chains (LCs). Among them, a heavy chain (DYNC2H1), two intermediate chains (DYNC2I2 and DYNC2I1), a light intermediate chain (DYNC2LI1), and a light chain (DYNLT2B) are unique to the cytoplasmic dynein complex 2, but a subset of the light chains are also shared by dynein-1 and dynein-2 complexes. Interacts with DYNC2I1; their C-terminal domains each bind a copy of the heavy chain, and their extended N-terminal regions are held together by an array of light chain dimers. Interacts with DYNLL2; this interaction is essential for dynein-2-mediated retrograde trafficking of ciliary proteins. Interacts with DYNLRB1; this interaction is essential for dynein-2-mediated retrograde trafficking of ciliary proteins. Interacts (via the WD domains) with MAP3K7 and TAB3. Interacts (via WD domains) with TAB2 (via C-terminus). Interacts (via WD domains) with TRAF6 (via TRAF-type domains). As to expression, expressed in brain, thymus, heart, lung, liver, spleen, kidney, testis and intestine.

The protein resides in the cytoplasm. It is found in the cytoskeleton. The protein localises to the cilium basal body. It localises to the cilium axoneme. Its subcellular location is the cell projection. The protein resides in the cilium. It is found in the microtubule organizing center. The protein localises to the centrosome. It localises to the filopodium. In terms of biological role, acts as one of several non-catalytic accessory components of the cytoplasmic dynein 2 complex (dynein-2 complex), a motor protein complex that drives the movement of cargos along microtubules within cilia and flagella in concert with the intraflagellar transport (IFT) system. DYNC2I2 plays a major role in retrograde ciliary protein trafficking and in ciliogenesis. Required also to maintain a functional transition zone. Acts as a negative regulator of the Toll-like and IL-1R receptor signaling pathways. Inhibits the MAP3K7-induced NF-kappa-B activation pathway. Inhibits MAP3K7 phosphorylation at 'Thr-184' and 'Thr-187' upon Il-1 beta stimulation. The protein is Cytoplasmic dynein 2 intermediate chain 2 (Dync2i2) of Mus musculus (Mouse).